The primary structure comprises 934 residues: Sorting nexin-14 (934 aa).

The next 2 membrane-spanning stretches (helical) occupy residues 27 to 47 (YPVI…LNQY) and 48 to 68 (LHIL…YCSL). Positions 129–303 (PSKVDASISE…MVLIFIDDSP (175 aa)) constitute a PXA domain. The RGS domain maps to 335–467 (DLKEIREQQD…CHSDEYFRHL (133 aa)). Residues 557–677 (WTISIPYVDF…DFLSPFSMES (121 aa)) form the PX domain.

Belongs to the sorting nexin family.

The protein localises to the lysosome membrane. It localises to the late endosome membrane. It is found in the cell projection. The protein resides in the dendrite. In terms of biological role, plays a role in maintaining normal neuronal excitability and synaptic transmission. May be involved in several stages of intracellular trafficking. Required for autophagosome clearance, possibly by mediating the fusion of lysosomes with autophagosomes. Binds phosphatidylinositol 3,5-bisphosphate (PtdIns(3,5)P2), a key component of late endosomes/lysosomes. Does not bind phosphatidylinositol 3-phosphate (PtdIns(3P)). This is Sorting nexin-14 from Danio rerio (Zebrafish).